A 250-amino-acid chain; its full sequence is Cell division protein ZapD (250 aa).

It belongs to the ZapD family. Interacts with FtsZ.

The protein localises to the cytoplasm. Its function is as follows. Cell division factor that enhances FtsZ-ring assembly. Directly interacts with FtsZ and promotes bundling of FtsZ protofilaments, with a reduction in FtsZ GTPase activity. This chain is Cell division protein ZapD, found in Yersinia enterocolitica serotype O:8 / biotype 1B (strain NCTC 13174 / 8081).